The chain runs to 664 residues: Cytoskeleton-associated protein 2 (664 aa).

The disordered stretch occupies residues methionine 1 to glutamine 38. The segment covering threonine 28–glutamine 38 has biased composition (basic and acidic residues). The interval proline 160–serine 319 is association with alpha- and beta-tubulin. Serine 186 bears the Phosphoserine mark. 4 disordered regions span residues isoleucine 254–leucine 273, leucine 283–proline 328, glycine 366–glycine 393, and alanine 512–valine 545. Residues glycine 300 to isoleucine 309 are compositionally biased toward polar residues. Residues glycine 366–proline 375 show a composition bias toward basic residues. The segment covering proline 533 to valine 545 has biased composition (basic and acidic residues). Threonine 561 is modified (phosphothreonine). Serine 577 is modified (phosphoserine). Residue threonine 579 is modified to Phosphothreonine. Residue serine 584 is modified to Phosphoserine.

This sequence belongs to the CKAP2 family. Associates with alpha- and beta-tubulins.

It localises to the cytoplasm. The protein resides in the cytoskeleton. Its subcellular location is the spindle. It is found in the spindle pole. In terms of biological role, possesses microtubule stabilizing properties. Involved in regulating aneuploidy, cell cycling, and cell death in a p53-dependent manner. The chain is Cytoskeleton-associated protein 2 from Mus musculus (Mouse).